The chain runs to 254 residues: Sugar fermentation stimulation protein homolog (254 aa).

This sequence belongs to the SfsA family.

This chain is Sugar fermentation stimulation protein homolog, found in Parasynechococcus marenigrum (strain WH8102).